The chain runs to 424 residues: Probable biofilm formation methyltransferase WspC (424 aa).

The 263-residue stretch at 1–263 folds into the CheR-type methyltransferase domain; sequence MNEQRFFRFL…IAQSFAYVRH (263 aa). S-adenosyl-L-methionine is bound by residues T68, R72, E109, D133, 187-188, and 206-207; these read NV and RN. A TPR repeat occupies 355-388; sequence AQVYYWLGLLSDTEGDAQQALSHYRKALYLEPQH.

Monomer. The TPR repeat does not mediate self-association.

Its function is as follows. Involved in biofilm formation. In Pseudomonas putida (strain ATCC 47054 / DSM 6125 / CFBP 8728 / NCIMB 11950 / KT2440), this protein is Probable biofilm formation methyltransferase WspC (wspC).